A 185-amino-acid polypeptide reads, in one-letter code: Elongation factor P (185 aa).

This sequence belongs to the elongation factor P family.

It is found in the cytoplasm. The protein operates within protein biosynthesis; polypeptide chain elongation. Its function is as follows. Involved in peptide bond synthesis. Stimulates efficient translation and peptide-bond synthesis on native or reconstituted 70S ribosomes in vitro. Probably functions indirectly by altering the affinity of the ribosome for aminoacyl-tRNA, thus increasing their reactivity as acceptors for peptidyl transferase. This chain is Elongation factor P, found in Azoarcus sp. (strain BH72).